The primary structure comprises 249 residues: MADS-box transcription factor 18 (249 aa).

The region spanning 1–61 (MGRGPVQLRR…GKLYEFSSHS (61 aa)) is the MADS-box domain. Residues 88-179 (QENWGDEYGI…KLMETEKEKN (92 aa)) enclose the K-box domain. A disordered region spans residues 184–249 (NTNREEQNGA…PPWMLRTSHT (66 aa)). Residues 210 to 236 (PTTNNSQSQPRGSGESEAQPSPAQAGN) are compositionally biased toward polar residues.

In terms of tissue distribution, widely expressed. Transcripts accumulate to higher levels in organs that retain meristematic characteristics: in the apical meristem and in the meristematic leaf primordia formed on its flank; in the developing panicle at the early stage of rachis-branch primordia differentiation; in the procambium of the rachis branches and in all floral organ primordia.

It is found in the nucleus. Probable transcription factor. This Oryza sativa subsp. indica (Rice) protein is MADS-box transcription factor 18 (MADS18).